The sequence spans 1068 residues: Retinoblastoma-like protein 1 (1068 aa).

At threonine 332 the chain carries Phosphothreonine; by CDK2. Threonine 369 bears the Phosphothreonine; by CDK4 mark. Residue threonine 385 is modified to Phosphothreonine; by CDK2. The segment at 385–584 (TPVASATQSV…WEALQVSANK (200 aa)) is domain A. A pocket; binds T and E1A region spans residues 385-949 (TPVASATQSV…GRVKSFALKY (565 aa)). The segment at 585–780 (VPTCEEVIFP…AQEVHSTGIN (196 aa)) is spacer. Position 640 is a phosphoserine; by CDK2 and CDK4 (serine 640). Phosphoserine is present on residues serine 650 and serine 749. The residue at position 762 (serine 762) is a Phosphoserine; by CDK2. Positions 781–949 (RPKRTGSLAL…GRVKSFALKY (169 aa)) are domain B. Residues serine 964 and serine 975 each carry the phosphoserine; by CDK2 and CDK4 modification. A Phosphoserine; by CDK2 modification is found at serine 988. Threonine 997 carries the phosphothreonine; by CDK2 modification. Serine 1009 carries the phosphoserine; by CDK2 modification. Residue serine 1041 is modified to Phosphoserine.

This sequence belongs to the retinoblastoma protein (RB) family. In terms of assembly, component of the DREAM complex (also named LINC complex) at least composed of E2F4, E2F5, LIN9, LIN37, LIN52, LIN54, MYBL1, MYBL2, RBL1, RBL2, RBBP4, TFDP1 and TFDP2. The complex exists in quiescent cells where it represses cell cycle-dependent genes. It dissociates in S phase when LIN9, LIN37, LIN52 and LIN54 form a subcomplex that binds to MYBL2. Interacts with AATF. Interacts with KDM5A. Interacts with KMT5B and KMT5C. Interacts with USP4. Interacts with RBBP9. (Microbial infection) Interacts with SV40 and JC virus large T antigens. Large T antigen, but not E1A, binds only to the unphosphorylated form. As to quaternary structure, (Microbial infection) Interacts with JC virus small t antigen. In terms of processing, cell-cycle arrest properties are inactivated by phosphorylation on Thr-332, Ser-640, Ser-964 and Ser-975 by CDK4.

Its subcellular location is the nucleus. In terms of biological role, key regulator of entry into cell division. Directly involved in heterochromatin formation by maintaining overall chromatin structure and, in particular, that of constitutive heterochromatin by stabilizing histone methylation. Recruits and targets histone methyltransferases KMT5B and KMT5C, leading to epigenetic transcriptional repression. Controls histone H4 'Lys-20' trimethylation. Probably acts as a transcription repressor by recruiting chromatin-modifying enzymes to promoters. Potent inhibitor of E2F-mediated trans-activation. May act as a tumor suppressor. The protein is Retinoblastoma-like protein 1 (RBL1) of Homo sapiens (Human).